The primary structure comprises 652 residues: UvrABC system protein C (652 aa).

In terms of domain architecture, GIY-YIG spans 19-96 (KTSGVYLWKD…IKKHKPRYNI (78 aa)). The 36-residue stretch at 203–238 (EDVSGTLKEKMKEAAEKKEFEKAARLRDGIQAVYAL) folds into the UVR domain.

The protein belongs to the UvrC family. Interacts with UvrB in an incision complex.

The protein localises to the cytoplasm. The UvrABC repair system catalyzes the recognition and processing of DNA lesions. UvrC both incises the 5' and 3' sides of the lesion. The N-terminal half is responsible for the 3' incision and the C-terminal half is responsible for the 5' incision. The polypeptide is UvrABC system protein C (Treponema denticola (strain ATCC 35405 / DSM 14222 / CIP 103919 / JCM 8153 / KCTC 15104)).